The sequence spans 366 residues: Isocitrate dehydrogenase [NAD] subunit alpha, mitochondrial (366 aa).

Residues 1–27 (MAGPAWISKVSRLLGAFHNPKQVTRGF) constitute a mitochondrion transit peptide. N6-succinyllysine is present on Lys77. Position 101 is a phosphothreonine (Thr101). Arg115, Arg125, and Arg146 together coordinate substrate. Lys223 carries the post-translational modification N6-acetyllysine. 3 residues coordinate Mg(2+): Asp233, Asp257, and Asp261. Position 343 is an N6-acetyllysine; alternate (Lys343). Lys343 is subject to N6-succinyllysine; alternate. Lys350 carries the post-translational modification N6-succinyllysine.

Belongs to the isocitrate and isopropylmalate dehydrogenases family. Heterooligomer of subunits alpha (IDH3A), beta (IDH3B), and gamma (IDH3G) in the apparent ratio of 2:1:1. The heterodimer containing one IDH3A and one IDH3B subunit and the heterodimer containing one IDH3A and one IDH3G subunit assemble into a heterotetramer (which contains two subunits of IDH3A, one of IDH3B and one of IDH3G) and further into the heterooctamer. Requires Mg(2+) as cofactor. Mn(2+) serves as cofactor.

It localises to the mitochondrion. The enzyme catalyses D-threo-isocitrate + NAD(+) = 2-oxoglutarate + CO2 + NADH. With respect to regulation, the heterotetramer and the heterodimer composed of IDH3A and IDH3G subunits can be allosterically activated by citrate (CIT) or/and ADP, and the two activators can act independently or synergistically. The heterodimer composed of IDH3A and IDH3B subunits cannot be allosterically regulated and the allosteric regulation of the heterotetramer is through the IDH3G subunit and not the IDH3B subunit. The IDH3G subunit contains the allosteric site which consists of a CIT-binding site and an ADP-binding site, and the binding of CIT and ADP causes conformational changes at the allosteric site which are transmitted to the active site in the catalytic subunit (IDH3A) through a cascade of conformational changes at the heterodimer interface, leading to stabilization of the isocitrate-binding at the active site and thus activation of the enzyme. ATP can activate the heterotetramer and the heterodimer composed of IDH3A and IDH3G subunits at low concentrations but inhibits their activities at high concentrations, whereas ATP exhibits only inhibitory effect on the heterodimer composed of IDH3A and IDH3B subunits. Catalytic subunit of the enzyme which catalyzes the decarboxylation of isocitrate (ICT) into alpha-ketoglutarate. The heterodimer composed of the alpha (IDH3A) and beta (IDH3B) subunits and the heterodimer composed of the alpha (IDH3A) and gamma (IDH3G) subunits, have considerable basal activity but the full activity of the heterotetramer (containing two subunits of IDH3A, one of IDH3B and one of IDH3G) requires the assembly and cooperative function of both heterodimers. This Pongo abelii (Sumatran orangutan) protein is Isocitrate dehydrogenase [NAD] subunit alpha, mitochondrial.